Consider the following 246-residue polypeptide: Bis(5'-nucleosyl)-tetraphosphatase PrpE [asymmetrical] (246 aa).

This sequence belongs to the PrpE family. The cofactor is Ni(2+).

It catalyses the reaction P(1),P(4)-bis(5'-guanosyl) tetraphosphate + H2O = GMP + GTP + 2 H(+). In terms of biological role, asymmetrically hydrolyzes Ap4p to yield AMP and ATP. The chain is Bis(5'-nucleosyl)-tetraphosphatase PrpE [asymmetrical] from Bacillus cereus (strain ATCC 14579 / DSM 31 / CCUG 7414 / JCM 2152 / NBRC 15305 / NCIMB 9373 / NCTC 2599 / NRRL B-3711).